The chain runs to 81 residues: Exodeoxyribonuclease 7 small subunit (81 aa).

This sequence belongs to the XseB family. Heterooligomer composed of large and small subunits.

The protein resides in the cytoplasm. The enzyme catalyses Exonucleolytic cleavage in either 5'- to 3'- or 3'- to 5'-direction to yield nucleoside 5'-phosphates.. Its function is as follows. Bidirectionally degrades single-stranded DNA into large acid-insoluble oligonucleotides, which are then degraded further into small acid-soluble oligonucleotides. In Ruegeria sp. (strain TM1040) (Silicibacter sp.), this protein is Exodeoxyribonuclease 7 small subunit.